Consider the following 248-residue polypeptide: MLGNHQIIRADGRKVDELRPVRITRHFTDAPEGSVLIECGNTRVMCTATFTPGVPRWRKDSGLGWVTAEYSMLPRATAERTDRESVRGKIGGRTHEISRLIGRCLRGVIDMKALGENQIQLDCDVLQADGGTRTASVTGAYVALVDAVNWAEKHRHIKSASRVLKDYVSAVSVGVINGTPMLDLPYIEDSQAMTDMNVAMTGSGTFIEIQGTAEHRPFNRAELGTLLDLAEKGNKELQAAQRAALSLD.

Phosphate is bound by residues Arg93 and 131–133 (GTR).

This sequence belongs to the RNase PH family. As to quaternary structure, homohexameric ring arranged as a trimer of dimers.

It catalyses the reaction tRNA(n+1) + phosphate = tRNA(n) + a ribonucleoside 5'-diphosphate. Phosphorolytic 3'-5' exoribonuclease that plays an important role in tRNA 3'-end maturation. Removes nucleotide residues following the 3'-CCA terminus of tRNAs; can also add nucleotides to the ends of RNA molecules by using nucleoside diphosphates as substrates, but this may not be physiologically important. Probably plays a role in initiation of 16S rRNA degradation (leading to ribosome degradation) during starvation. The sequence is that of Ribonuclease PH from Bifidobacterium longum (strain NCC 2705).